Consider the following 169-residue polypeptide: MVDEATKKTLAAIPLLKTKAGPRDGKDWVDRLKEEYTSLIKYVSNNKEADNDWFRLESNKEGTRWFGKCWYIHNLLKYEFDVEFDIPITYPTTAPEIALPELDGKTAKMYRGGKICMTDHFKPLWGRNVPRFGIAHAMALGLGPWLAVEIPDLIEKGLIKHKDKSESSR.

The active-site Glycyl thioester intermediate is Cys116.

This sequence belongs to the ubiquitin-conjugating enzyme family. UFC1 subfamily.

Functionally, E2-like enzyme which forms an intermediate with UFM1 via a thioester linkage. The sequence is that of Ubiquitin-fold modifier-conjugating enzyme 1 from Nematostella vectensis (Starlet sea anemone).